The chain runs to 420 residues: Serine hydroxymethyltransferase (420 aa).

(6S)-5,6,7,8-tetrahydrofolate contacts are provided by residues Leu121 and 125 to 127; that span reads GHL. Position 229 is an N6-(pyridoxal phosphate)lysine (Lys229).

This sequence belongs to the SHMT family. As to quaternary structure, homodimer. Pyridoxal 5'-phosphate is required as a cofactor.

It localises to the cytoplasm. It carries out the reaction (6R)-5,10-methylene-5,6,7,8-tetrahydrofolate + glycine + H2O = (6S)-5,6,7,8-tetrahydrofolate + L-serine. It functions in the pathway one-carbon metabolism; tetrahydrofolate interconversion. It participates in amino-acid biosynthesis; glycine biosynthesis; glycine from L-serine: step 1/1. Catalyzes the reversible interconversion of serine and glycine with tetrahydrofolate (THF) serving as the one-carbon carrier. This reaction serves as the major source of one-carbon groups required for the biosynthesis of purines, thymidylate, methionine, and other important biomolecules. Also exhibits THF-independent aldolase activity toward beta-hydroxyamino acids, producing glycine and aldehydes, via a retro-aldol mechanism. The chain is Serine hydroxymethyltransferase from Wigglesworthia glossinidia brevipalpis.